The primary structure comprises 205 residues: Peptidyl-tRNA hydrolase (205 aa).

A tRNA-binding site is contributed by tyrosine 14. The active-site Proton acceptor is histidine 19. 3 residues coordinate tRNA: tyrosine 64, asparagine 66, and asparagine 112.

It belongs to the PTH family. As to quaternary structure, monomer.

It localises to the cytoplasm. It carries out the reaction an N-acyl-L-alpha-aminoacyl-tRNA + H2O = an N-acyl-L-amino acid + a tRNA + H(+). Its function is as follows. Hydrolyzes ribosome-free peptidyl-tRNAs (with 1 or more amino acids incorporated), which drop off the ribosome during protein synthesis, or as a result of ribosome stalling. Functionally, catalyzes the release of premature peptidyl moieties from peptidyl-tRNA molecules trapped in stalled 50S ribosomal subunits, and thus maintains levels of free tRNAs and 50S ribosomes. The sequence is that of Peptidyl-tRNA hydrolase from Parvibaculum lavamentivorans (strain DS-1 / DSM 13023 / NCIMB 13966).